The primary structure comprises 122 residues: Large ribosomal subunit protein uL14c (122 aa).

It belongs to the universal ribosomal protein uL14 family. In terms of assembly, part of the 50S ribosomal subunit.

The protein resides in the plastid. Its subcellular location is the chloroplast. Its function is as follows. Binds to 23S rRNA. The polypeptide is Large ribosomal subunit protein uL14c (Fagopyrum esculentum subsp. ancestrale (Wild buckwheat)).